The primary structure comprises 198 residues: Putative pseudouridine methyltransferase (198 aa).

S-adenosyl-L-methionine contacts are provided by Leu-132 and Cys-186.

It belongs to the methyltransferase superfamily. TrmY family.

It is found in the cytoplasm. The chain is Putative pseudouridine methyltransferase from Vibrio vulnificus (strain CMCP6).